We begin with the raw amino-acid sequence, 464 residues long: Siroheme synthase (464 aa).

The interval 1–203 (MEYLPLFHNL…GQGAEAERLL (203 aa)) is precorrin-2 dehydrogenase /sirohydrochlorin ferrochelatase. NAD(+)-binding positions include 22 to 23 (EI) and 43 to 44 (PE). Phosphoserine is present on Ser-128. The uroporphyrinogen-III C-methyltransferase stretch occupies residues 216 to 464 (GEVYLVGAGP…AWFEGAQSEV (249 aa)). S-adenosyl-L-methionine is bound at residue Pro-225. Residue Asp-248 is the Proton acceptor of the active site. The active-site Proton donor is Lys-270. S-adenosyl-L-methionine-binding positions include 301-303 (GGD), Ile-306, 331-332 (TA), Met-383, and Gly-412.

This sequence in the N-terminal section; belongs to the precorrin-2 dehydrogenase / sirohydrochlorin ferrochelatase family. The protein in the C-terminal section; belongs to the precorrin methyltransferase family.

The enzyme catalyses uroporphyrinogen III + 2 S-adenosyl-L-methionine = precorrin-2 + 2 S-adenosyl-L-homocysteine + H(+). The catalysed reaction is precorrin-2 + NAD(+) = sirohydrochlorin + NADH + 2 H(+). It catalyses the reaction siroheme + 2 H(+) = sirohydrochlorin + Fe(2+). Its pathway is cofactor biosynthesis; adenosylcobalamin biosynthesis; precorrin-2 from uroporphyrinogen III: step 1/1. It functions in the pathway cofactor biosynthesis; adenosylcobalamin biosynthesis; sirohydrochlorin from precorrin-2: step 1/1. The protein operates within porphyrin-containing compound metabolism; siroheme biosynthesis; precorrin-2 from uroporphyrinogen III: step 1/1. It participates in porphyrin-containing compound metabolism; siroheme biosynthesis; siroheme from sirohydrochlorin: step 1/1. Its pathway is porphyrin-containing compound metabolism; siroheme biosynthesis; sirohydrochlorin from precorrin-2: step 1/1. In terms of biological role, multifunctional enzyme that catalyzes the SAM-dependent methylations of uroporphyrinogen III at position C-2 and C-7 to form precorrin-2 via precorrin-1. Then it catalyzes the NAD-dependent ring dehydrogenation of precorrin-2 to yield sirohydrochlorin. Finally, it catalyzes the ferrochelation of sirohydrochlorin to yield siroheme. The polypeptide is Siroheme synthase (Pseudomonas fluorescens (strain ATCC BAA-477 / NRRL B-23932 / Pf-5)).